Consider the following 649-residue polypeptide: 1-deoxy-D-xylulose-5-phosphate synthase (649 aa).

Thiamine diphosphate contacts are provided by residues H73 and 114-116 (SHA). D145 lines the Mg(2+) pocket. Thiamine diphosphate-binding positions include 146-147 (GA), N175, Y286, and E367. Residue N175 coordinates Mg(2+).

Belongs to the transketolase family. DXPS subfamily. In terms of assembly, homodimer. Requires Mg(2+) as cofactor. Thiamine diphosphate is required as a cofactor.

It catalyses the reaction D-glyceraldehyde 3-phosphate + pyruvate + H(+) = 1-deoxy-D-xylulose 5-phosphate + CO2. It participates in metabolic intermediate biosynthesis; 1-deoxy-D-xylulose 5-phosphate biosynthesis; 1-deoxy-D-xylulose 5-phosphate from D-glyceraldehyde 3-phosphate and pyruvate: step 1/1. In terms of biological role, catalyzes the acyloin condensation reaction between C atoms 2 and 3 of pyruvate and glyceraldehyde 3-phosphate to yield 1-deoxy-D-xylulose-5-phosphate (DXP). This is 1-deoxy-D-xylulose-5-phosphate synthase from Rhodococcus jostii (strain RHA1).